Consider the following 99-residue polypeptide: Small ribosomal subunit protein eS24 (99 aa).

It belongs to the eukaryotic ribosomal protein eS24 family.

The polypeptide is Small ribosomal subunit protein eS24 (Pyrococcus horikoshii (strain ATCC 700860 / DSM 12428 / JCM 9974 / NBRC 100139 / OT-3)).